A 111-amino-acid chain; its full sequence is Nucleoid-associated protein lhv_0401 (111 aa).

This sequence belongs to the YbaB/EbfC family. As to quaternary structure, homodimer.

The protein localises to the cytoplasm. The protein resides in the nucleoid. Functionally, binds to DNA and alters its conformation. May be involved in regulation of gene expression, nucleoid organization and DNA protection. The protein is Nucleoid-associated protein lhv_0401 of Lactobacillus helveticus (strain DPC 4571).